The primary structure comprises 305 residues: MSAIDKEAVKQFLLSLQDSICQQLEQADGTALFEEDAWQREPGERLGGGGRTRVMTNGAVFEQGGVNFSHVAGKAMPASATAHRPELAGRKFEAMGVSLVIHPKNPYIPTSHANVRFFIAEKEGEDPIWWFGGGFDLTPFYPVDEDCQSWHQTAKDLCAPFGDDVYQEHKEWCDKYFYLPHRDETRGVGGLFFDDLNEWGFEKSFAYMQAVGEGFAAAYLPIVERRKETPYGERERDFQLYRRGRYVEFNLVYDRGTLFGLQSGGRTESILMSMPPLARWEYRYEPQACSPEALLYSDYLKPRVW.

Serine 98 contributes to the substrate binding site. A divalent metal cation is bound by residues histidine 102 and histidine 112. The Proton donor role is filled by histidine 112. Substrate is bound at residue 114–116 (NVR). Residues histidine 151 and histidine 181 each contribute to the a divalent metal cation site. The tract at residues 246-281 (YVEFNLVYDRGTLFGLQSGGRTESILMSMPPLARWE) is important for dimerization. Substrate is bound at residue 264 to 266 (GGR).

This sequence belongs to the aerobic coproporphyrinogen-III oxidase family. In terms of assembly, homodimer. A divalent metal cation serves as cofactor.

The protein localises to the cytoplasm. The enzyme catalyses coproporphyrinogen III + O2 + 2 H(+) = protoporphyrinogen IX + 2 CO2 + 2 H2O. It functions in the pathway porphyrin-containing compound metabolism; protoporphyrin-IX biosynthesis; protoporphyrinogen-IX from coproporphyrinogen-III (O2 route): step 1/1. In terms of biological role, involved in the heme biosynthesis. Catalyzes the aerobic oxidative decarboxylation of propionate groups of rings A and B of coproporphyrinogen-III to yield the vinyl groups in protoporphyrinogen-IX. The protein is Oxygen-dependent coproporphyrinogen-III oxidase of Vibrio atlanticus (strain LGP32) (Vibrio splendidus (strain Mel32)).